A 137-amino-acid polypeptide reads, in one-letter code: Putative pre-16S rRNA nuclease (137 aa).

Belongs to the YqgF nuclease family.

It is found in the cytoplasm. Could be a nuclease involved in processing of the 5'-end of pre-16S rRNA. In Bacillus cereus (strain B4264), this protein is Putative pre-16S rRNA nuclease.